We begin with the raw amino-acid sequence, 895 residues long: Histone-lysine N-methyltransferase EZ3 (895 aa).

Residues 1-13 are compositionally biased toward low complexity; sequence MASSSKASDSSSQ. Disordered stretches follow at residues 1 to 30 and 396 to 446; these read MASSSKASDSSSQRSKRSDQGTGREAAPAS and SSVS…PGKR. The segment covering 396–422 has biased composition (polar residues); it reads SSVSAEESTTPPSADTSETENASSDMP. A compositionally biased stretch (basic residues) spans 427–436; sequence RKYKISKRGP. The SANT domain occupies 528–578; sequence TLSCWSALERDLYLKGIEIFGKNSCLIARNLLSGMKTCMEVANYMYNNGAA. In terms of domain architecture, CXC spans 628 to 732; it reads AGHPTVRKRI…SLGEPPARGD (105 aa). Residues 747-862 enclose the SET domain; the sequence is QRILLGRSDV…ASEELFYDYR (116 aa). Residues 870–895 form a disordered region; the sequence is AWARRPEGSKKDEASVSHHRAHKVAR. The segment covering 873 to 885 has biased composition (basic and acidic residues); sequence RRPEGSKKDEASV. Residues 886–895 show a composition bias toward basic residues; the sequence is SHHRAHKVAR.

Belongs to the class V-like SAM-binding methyltransferase superfamily. Histone-lysine methyltransferase family. EZ subfamily. Widely expressed.

It is found in the nucleus. It catalyses the reaction L-lysyl(27)-[histone H3] + 3 S-adenosyl-L-methionine = N(6),N(6),N(6)-trimethyl-L-lysyl(27)-[histone H3] + 3 S-adenosyl-L-homocysteine + 3 H(+). Its function is as follows. Polycomb group (PcG) protein. Catalytic subunit of some PcG multiprotein complex, which methylates 'Lys-27' of histone H3, leading to transcriptional repression of the affected target genes. PcG proteins are not required to initiate repression, but to maintain it during later stages of development. This Zea mays (Maize) protein is Histone-lysine N-methyltransferase EZ3 (EZ3).